Consider the following 113-residue polypeptide: Photosystem II reaction center Psb28 protein (113 aa).

The protein belongs to the Psb28 family. In terms of assembly, part of the photosystem II complex.

Its subcellular location is the cellular thylakoid membrane. The protein is Photosystem II reaction center Psb28 protein of Prochlorococcus marinus (strain NATL2A).